Consider the following 352-residue polypeptide: uncharacterized protein (352 aa).

The transit peptide at 1–55 directs the protein to the chloroplast; sequence MAMAALTSSSSAITLLNKPFLPNRSSFFSSDSQSPLLRFSASTSVRSRFPSAAIS.

This sequence belongs to the methyltransferase superfamily.

Its subcellular location is the plastid. It is found in the chloroplast. The protein localises to the plastoglobule. This is an uncharacterized protein from Arabidopsis thaliana (Mouse-ear cress).